A 161-amino-acid chain; its full sequence is MLSPKRTKFRKQQRGRMRGVATRGNKIAFGQFALQAQDCGWVTSRQIEASRRAMTRYVKRGGQIWIRIFPDKPVTMRPAETRMGSGKGNPEFWVAVVKPGRILFEMGGDEITETIAKEAMRLAQYKLPVKTKFISLDEDLNKGNYKPAKTPVTADDSESSS.

Positions 140 to 161 (LNKGNYKPAKTPVTADDSESSS) are disordered.

It belongs to the universal ribosomal protein uL16 family. Part of the 50S ribosomal subunit.

Binds 23S rRNA and is also seen to make contacts with the A and possibly P site tRNAs. This Prochlorococcus marinus (strain NATL1A) protein is Large ribosomal subunit protein uL16.